A 1145-amino-acid polypeptide reads, in one-letter code: Structure-specific endonuclease subunit SLX4 (1145 aa).

The interval 48–108 is disordered; sequence ADIPVQPDPP…GKSKQQPSIS (61 aa). The stretch at 321-372 forms a coiled coil; that stretch reads ERETQKCRQLRQQHELVYAELERYYGDPQKLEEEVMQELDELEKLVADNMIE. The segment covering 382-393 has biased composition (low complexity); sequence EAESSSTGSSPS. Disordered regions lie at residues 382–442, 613–634, and 666–689; these read EAES…EDEP, QSSHQLGILTTPNDTEHSSSFS, and SAEKRVSPAASPYKQSDASVDLTQ. Basic and acidic residues predominate over residues 395–410; that stretch reads EPPDKRPKMTMEDKEN. 3 stretches are compositionally biased toward polar residues: residues 411–430, 613–633, and 678–689; these read LQPTTSKASLTVPAQSTRCT, QSSHQLGILTTPNDTEHSSSF, and YKQSDASVDLTQ.

It belongs to the SLX4 family. As to quaternary structure, forms a heterodimer with SLX1. Interacts with mei-9; catalytic subunit of the MEI-9-ERCC1 endonuclease.

It localises to the nucleus. Its function is as follows. Regulatory subunit that interacts with and increases the activity of different structure-specific endonucleases. Has several distinct roles in protecting genome stability by resolving diverse forms of deleterious DNA structures originating from replication and recombination intermediates and from DNA damage. Component of the SLX1-SLX4 structure-specific endonuclease that resolves DNA secondary structures generated during DNA repair and recombination. Has endonuclease activity towards branched DNA substrates, introducing single-strand cuts in duplex DNA close to junctions with ss-DNA. Interacts with the structure-specific MEI-9-ERCC1 endonuclease to generate meiotic crossovers. The sequence is that of Structure-specific endonuclease subunit SLX4 (mus312) from Drosophila melanogaster (Fruit fly).